The chain runs to 592 residues: MKRSKELITKNHSQEETSILRCWKCRKCIASSGCFMEYFENQVIKDKDDSVDAQNICHVWHMNIESLPEWISCLIQKAQWTVGKLNCPFCGARLGGFNFVSTPKCSCGQLAAVHLSKSRTDYQPTQAGRLMRPSVKYLSHPRVQSGCDKEVLLTGGGSKNRNHRLLNMARNNNDPGRLTEALCLEVRPTYFEMKNEKLLSKASEPKYQLFVPQLVTGRCTTRAFHRKSHSLDLNISEKLTLLPTLYEIRGKTTAYSRLNETQPIDLSGLPLQSSKNSCSFQNPSSFDPGMLLQRFSVAPHETQTQRGGEFQCGLEAASVYSDHTNTNNLTFLMDLPSAGRSMPEASDQEEHLSPLDFLHSANFSLGSINQRLNKRERSKLKNLRRKQRRRERWLQKQGKYSGVGFLDHMTLNNEMSTDEDNEYAEEKDSYICAVCLDVYFNPYMCYPCRHIFCEPCLRTLAKDNPSSTPCPLCRTIISRVFFQTELNNATKTFFTKEYLKIKQSFQKSNSAKWPLPSCRKAFHLFGGFHRHAAPVTRRQFPHGAHRMDYLHFEDDSRGWWFDMDMVIIYIYSVNWVIGFIVFCFLCYFFFPF.

The Cytoplasmic segment spans residues 1 to 564 (MKRSKELITK…DSRGWWFDMD (564 aa)). Ser230 is subject to Phosphoserine. The RING-type zinc finger occupies 432–474 (CAVCLDVYFNPYMCYPCRHIFCEPCLRTLAKDNPSSTPCPLCR). The helical transmembrane segment at 565–585 (MVIIYIYSVNWVIGFIVFCFL) threads the bilayer. Topologically, residues 586–592 (CYFFFPF) are extracellular.

Interacts with ZIC2.

Its subcellular location is the endoplasmic reticulum membrane. It is found in the nucleus envelope. It carries out the reaction S-ubiquitinyl-[E2 ubiquitin-conjugating enzyme]-L-cysteine + [acceptor protein]-L-lysine = [E2 ubiquitin-conjugating enzyme]-L-cysteine + N(6)-ubiquitinyl-[acceptor protein]-L-lysine.. It participates in protein modification; protein ubiquitination. Its function is as follows. E3 ubiquitin-protein ligase which promotes polyubiquitination and degradation by the proteasome pathway of ZIC2. The sequence is that of E3 ubiquitin-protein ligase RNF180 (RNF180) from Pongo abelii (Sumatran orangutan).